The following is a 414-amino-acid chain: Cytochrome P450 GfsF (414 aa).

The segment at Met-1 to Pro-32 is disordered. 6 residues coordinate heme b: His-75, His-107, Arg-111, Arg-303, His-361, and Cys-363.

It belongs to the cytochrome P450 family. As to quaternary structure, monomer. The cofactor is heme b.

It functions in the pathway antibiotic biosynthesis. Its function is as follows. Involved in the synthesis of the 16-membered macrolide antibiotics FD-891 and FD-892. Consecutively catalyzes epoxidation of C8-C9 and then hydroxylation at C10 to convert 25-O-methyl-FD-892 to FD-891. Consecutively catalyzes epoxidation of C8-C9 and then hydroxylation at C10 to convert 8,9-epoxy-FD-892 to 25-O-demethyl-FD-891 as well as converting 25-oxo-FD-892 to 8,9-epoxy-25-oxo-FD-892 and 8,9-epoxy-10-hydroxy-25-oxo-FD-892. In vitro is furnished with P.putida putidaredoxin and putidaredoxin reductase to provide the required two-electron reduction. This chain is Cytochrome P450 GfsF, found in Streptomyces halstedii.